We begin with the raw amino-acid sequence, 706 residues long: Probable N(6)-adenosine-methyltransferase MT-A70-like (706 aa).

Disordered regions lie at residues 64-114 (RPFV…VAAA) and 223-261 (TLPL…PDMW). Low complexity predominate over residues 103 to 114 (SPGSSPASVAAA). A compositionally biased stretch (pro residues) spans 227 to 236 (LQPPPAPQMP). S-adenosyl-L-methionine is bound by residues 479–480 (DI) and Asp-497. The positively charged region required for RNA-binding stretch occupies residues 567–580 (RIIRTGRTGHWLNH). S-adenosyl-L-methionine is bound by residues Lys-614, 637-640 (RMHN), and 650-651 (NQ). Residues 669-706 (AYPDSEVQPPSPPRASAPIDGDQGTSQKPTVSDGERPA) form a disordered region.

This sequence belongs to the MT-A70-like family.

The protein resides in the nucleus. The catalysed reaction is an adenosine in mRNA + S-adenosyl-L-methionine = an N(6)-methyladenosine in mRNA + S-adenosyl-L-homocysteine + H(+). Its function is as follows. Probable N6-methyltransferase that methylates adenosine residues of some mRNAs. N6-methyladenosine (m6A), which is present at internal sites of some mRNAs, may play a role in the efficiency of mRNA splicing, transport or translation. The chain is Probable N(6)-adenosine-methyltransferase MT-A70-like from Oryza sativa subsp. japonica (Rice).